Here is a 151-residue protein sequence, read N- to C-terminus: Large ribosomal subunit protein uL13 (151 aa).

The protein belongs to the universal ribosomal protein uL13 family. Part of the 50S ribosomal subunit.

In terms of biological role, this protein is one of the early assembly proteins of the 50S ribosomal subunit, although it is not seen to bind rRNA by itself. It is important during the early stages of 50S assembly. The polypeptide is Large ribosomal subunit protein uL13 (Synechococcus sp. (strain JA-2-3B'a(2-13)) (Cyanobacteria bacterium Yellowstone B-Prime)).